A 280-amino-acid chain; its full sequence is Uroporphyrinogen-III C-methyltransferase (280 aa).

S-adenosyl-L-homocysteine-binding positions include proline 24, 100–102, 130–131, methionine 184, alanine 213, and alanine 241; these read GGD and TA.

Belongs to the precorrin methyltransferase family. As to quaternary structure, homodimer.

The catalysed reaction is uroporphyrinogen III + 2 S-adenosyl-L-methionine = precorrin-2 + 2 S-adenosyl-L-homocysteine + H(+). It catalyses the reaction uroporphyrinogen III + S-adenosyl-L-methionine = precorrin-1 + S-adenosyl-L-homocysteine + H(+). The enzyme catalyses precorrin-1 + S-adenosyl-L-methionine = precorrin-2 + S-adenosyl-L-homocysteine. The protein operates within cofactor biosynthesis; adenosylcobalamin biosynthesis; precorrin-2 from uroporphyrinogen III: step 1/1. It participates in porphyrin-containing compound metabolism; siroheme biosynthesis; precorrin-2 from uroporphyrinogen III: step 1/1. With respect to regulation, S-adenosylhomocysteine is an extremely powerful competitive inhibitor of the uroporphyrinogen III methylation. SUMT exhibits a substrate inhibition phenomenon at uroporphyrinogen III concentrations above 2 uM; this property might play a regulatory role in cobalamin biosynthesis. The enzyme activity is completely insensitive to feedback inhibition by cobalamin and corrinoid intermediates. Its function is as follows. Catalyzes the two successive C-2 and C-7 methylation reactions involved in the conversion of uroporphyrinogen III to precorrin-2 via the intermediate formation of precorrin-1. It is a step in the biosynthesis of both cobalamin (vitamin B12) and siroheme. Neither uroporphyrin III nor the chlorin (factor I) is a substrate of SUMT. This Sinorhizobium sp protein is Uroporphyrinogen-III C-methyltransferase.